An 82-amino-acid polypeptide reads, in one-letter code: uncharacterized protein (82 aa).

A signal peptide spans 1–19 (MKNLLKILLIIAFANPVFA).

This is an uncharacterized protein from Rickettsia prowazekii (strain Madrid E).